We begin with the raw amino-acid sequence, 406 residues long: Kelch domain-containing protein 2 (406 aa).

Kelch repeat units follow at residues 31 to 85, 92 to 136, 148 to 207, 221 to 259, 271 to 311, and 322 to 359; these read ERSG…NTEG, SGSC…ERID, LGVW…IWSQ, HACA…NELI, HSLT…IKFN, and HTAC…IFSV.

Component of a CRL2(KLHDC2) E3 ubiquitin-protein ligase complex, also named ECS(KLHDC2) complex, composed of CUL2, Elongin BC (ELOB and ELOC), RBX1 and substrate-specific adapter KLHDC2. May form oligomers as a KLHDC2-ELOB-ELOC complex; this interaction is autoinhibitory for the E3 ligase complex as the substrate-binding site of KLHDC2 is blocked in the oligomer. Interacts with CREB3; interaction is direct and specific as it does not interact with CREB1, ATF4, ATF6, JUN, FOS, CEBPA or herpes simplex virus transactivator VP16. Post-translationally, autoubiquitinated by the CRL2(KLHDC2) E3 ligase complex.

It is found in the nucleus. It functions in the pathway protein modification; protein ubiquitination. In terms of biological role, substrate-recognition component of a Cul2-RING (CRL2) E3 ubiquitin-protein ligase complex of the DesCEND (destruction via C-end degrons) pathway, which recognizes a C-degron located at the extreme C terminus of target proteins, leading to their ubiquitination and degradation. The C-degron recognized by the DesCEND pathway is usually a motif of less than ten residues and can be present in full-length proteins, truncated proteins or proteolytically cleaved forms. The CRL2(KLHDC2) complex specifically recognizes proteins with a diglycine (Gly-Gly) at the C-terminus, leading to their ubiquitination and degradation. The CRL2(KLHDC2) complex mediates ubiquitination and degradation of truncated SELENOK and SELENOS selenoproteins produced by failed UGA/Sec decoding, which end with a diglycine. The CRL2(KLHDC2) complex also recognizes proteolytically cleaved proteins ending with Gly-Gly, such as the N-terminal fragment of USP1, leading to their degradation. May also act as an indirect repressor of CREB3-mediated transcription by interfering with CREB3-DNA-binding. The sequence is that of Kelch domain-containing protein 2 from Bos taurus (Bovine).